The following is a 397-amino-acid chain: Enoyl-[acyl-carrier-protein] reductase [NADH] (397 aa).

NAD(+) contacts are provided by residues 47–52 (GASTGY), 73–74 (LE), 110–111 (DA), and 138–139 (LA). Y224 contacts substrate. Y234 serves as the catalytic Proton donor. Residues K243 and 272–274 (LVT) contribute to the NAD(+) site.

This sequence belongs to the TER reductase family. Monomer.

It catalyses the reaction a 2,3-saturated acyl-[ACP] + NAD(+) = a (2E)-enoyl-[ACP] + NADH + H(+). It participates in lipid metabolism; fatty acid biosynthesis. In terms of biological role, involved in the final reduction of the elongation cycle of fatty acid synthesis (FAS II). Catalyzes the reduction of a carbon-carbon double bond in an enoyl moiety that is covalently linked to an acyl carrier protein (ACP). The polypeptide is Enoyl-[acyl-carrier-protein] reductase [NADH] (Methylobacillus flagellatus (strain ATCC 51484 / DSM 6875 / VKM B-1610 / KT)).